Reading from the N-terminus, the 204-residue chain is bMERB domain-containing protein 1 (204 aa).

In terms of domain architecture, bMERB spans 3–150 (LKQSLSTHLE…EQEEDKEMAD (148 aa)). The tract at residues 162–187 (VTKSPASSRAEKKAEPPPSKPTVAKT) is disordered.

The protein is bMERB domain-containing protein 1 of Homo sapiens (Human).